Here is a 500-residue protein sequence, read N- to C-terminus: Recombining binding protein suppressor of hairless (500 aa).

Residues 1–30 (MDHTEGSPAEEPPAHAPSPGKFGERPPPKR) are disordered. DNA-binding regions lie at residues 57-67 (QKSYGNEKRFF) and 165-170 (SKPSKK). N6-acetyllysine is present on Lys-175. Residues 192–197 (RLRSQT) form a DNA-binding region. Positions 355–445 (PVVESLQLNG…YSTSLTFTYT (91 aa)) constitute an IPT/TIG domain. A compositionally biased stretch (polar residues) spans 465–481 (SSQVPPNESNTNSEGSY). A disordered region spans residues 465–500 (SSQVPPNESNTNSEGSYTNASTNSTSVTSSTATVVS). Low complexity predominate over residues 482–500 (TNASTNSTSVTSSTATVVS).

It belongs to the Su(H) family. In terms of assembly, interacts with activated NOTCH1, NOTCH2 or NOTCH3. Interacts with MINT/SHARP. This interaction may mediate the recruitment of large corepressor complexes containing proteins such as HDAC1, HDAC2, NCOR2, SAP30, FHL1/KYOT2 and CIR1. Interacts with EP300, MAML1 and PTF1A. Interacts with RITA1/C12orf52, leading to nuclear export, prevent the interaction between RBPJ and NICD product and subsequent down-regulation of the Notch signaling pathway. Interacts with SNW1. Interacts with CHCHD2 and CXXC5. Interacts with BEND6 (via BEN domain). Interacts with NKAPL. Interacts with ZMIZ1. Interacts with RBM15. Interacts with L3MBTL3 and KDM1A; the interaction with KDM1A is weaker in the absence of L3MBTL3 and the interaction with L3MBTL3 is impaired by Notch-derived peptide containing the intracellular domain (NICD). (Microbial infection) Interacts with EBV EBNA2. Interacts with EBV EBNA3. Interacts with EBV EBNA4. Interacts with EBV EBNA6 (via N-terminus).

It is found in the nucleus. The protein localises to the cytoplasm. Its function is as follows. Transcriptional regulator that plays a central role in Notch signaling, a signaling pathway involved in cell-cell communication that regulates a broad spectrum of cell-fate determinations. Acts as a transcriptional repressor when it is not associated with Notch proteins. When associated with some NICD product of Notch proteins (Notch intracellular domain), it acts as a transcriptional activator that activates transcription of Notch target genes. Probably represses or activates transcription via the recruitment of chromatin remodeling complexes containing histone deacetylase or histone acetylase proteins, respectively. Specifically binds to the immunoglobulin kappa-type J segment recombination signal sequence. Binds specifically to methylated DNA. Binds to the oxygen responsive element of COX4I2 and activates its transcription under hypoxia conditions (4% oxygen). Negatively regulates the phagocyte oxidative burst in response to bacterial infection by repressing transcription of NADPH oxidase subunits. In Homo sapiens (Human), this protein is Recombining binding protein suppressor of hairless.